The primary structure comprises 451 residues: ADP-specific phosphofructokinase (451 aa).

The ADPK domain maps to 1-450 (MSVPQDVSIF…FITYVNYLKR (450 aa)). The Mg(2+) site is built by E261, E291, and D434. The active-site Proton acceptor is D434.

It belongs to the carbohydrate kinase PfkC family. Mg(2+) serves as cofactor.

The protein resides in the cytoplasm. It carries out the reaction beta-D-fructose 6-phosphate + ADP = beta-D-fructose 1,6-bisphosphate + AMP + H(+). Its pathway is carbohydrate degradation; glycolysis. Its function is as follows. Catalyzes the phosphorylation of fructose 6-phosphate to fructose 1,6-bisphosphate using ADP as the phosphate donor. This chain is ADP-specific phosphofructokinase, found in Pyrococcus abyssi (strain GE5 / Orsay).